Here is a 358-residue protein sequence, read N- to C-terminus: Alanine racemase (358 aa).

K35 (proton acceptor; specific for D-alanine) is an active-site residue. K35 bears the N6-(pyridoxal phosphate)lysine mark. R130 contacts substrate. Catalysis depends on Y255, which acts as the Proton acceptor; specific for L-alanine. Substrate is bound at residue M303.

It belongs to the alanine racemase family. The cofactor is pyridoxal 5'-phosphate.

The enzyme catalyses L-alanine = D-alanine. It functions in the pathway amino-acid biosynthesis; D-alanine biosynthesis; D-alanine from L-alanine: step 1/1. Catalyzes the interconversion of L-alanine and D-alanine. May also act on other amino acids. The sequence is that of Alanine racemase (alr) from Shewanella oneidensis (strain ATCC 700550 / JCM 31522 / CIP 106686 / LMG 19005 / NCIMB 14063 / MR-1).